A 295-amino-acid polypeptide reads, in one-letter code: Protoheme IX farnesyltransferase (295 aa).

The next 9 membrane-spanning stretches (helical) occupy residues 31-51, 54-74, 98-118, 121-141, 147-167, 173-193, 220-240, 245-265, and 273-293; these read GLVM…IGAA, VLTV…NCYL, FVAL…LSLA, GLTA…YTPM, TALF…WTSV, AGGL…FLAI, LWMA…VPLG, GYAI…ISGI, and ARTF…ALFL.

Belongs to the UbiA prenyltransferase family. Protoheme IX farnesyltransferase subfamily.

The protein resides in the cell inner membrane. It catalyses the reaction heme b + (2E,6E)-farnesyl diphosphate + H2O = Fe(II)-heme o + diphosphate. The protein operates within porphyrin-containing compound metabolism; heme O biosynthesis; heme O from protoheme: step 1/1. Converts heme B (protoheme IX) to heme O by substitution of the vinyl group on carbon 2 of heme B porphyrin ring with a hydroxyethyl farnesyl side group. In Anaeromyxobacter dehalogenans (strain 2CP-C), this protein is Protoheme IX farnesyltransferase.